The following is a 179-amino-acid chain: Apolipophorin-3b (179 aa).

The signal sequence occupies residues Met1 to Ala16. 12 repeats span residues Val30–Ala40, Ala41–Thr52, Pro53–Leu60, Thr61–Leu78, Lys79–Val89, Ala90–Asn99, Leu100–Pro113, Ala114–Val127, Gly128–Val140, Ala141–Ala151, Leu152–Asn165, and Leu166–Asn179. Asn34 carries N-linked (GlcNAc...) asparagine glycosylation. A glycan (N-linked (GlcNAc...) asparagine) is linked at Asn101. Residues Leu152–Asn179 are disordered. Over residues Asn165–Asn179 the composition is skewed to polar residues.

This sequence belongs to the insect apolipophorin-3 family. In terms of assembly, equilibrium between a soluble monomer and a bound lipoprotein form. Apolipophorin-3 associates with lipophorin during lipid loading until each particle contains 14 molecules of apolipophorin-3 in L.migratoria (5 molecules of apolipophorin-3a and 9 of apolipophorin-3b). In terms of tissue distribution, hemolymph.

The protein localises to the secreted. Assists in the loading of diacylglycerol, generated from triacylglycerol stores in the fat body through the action of adipokinetic hormone, into lipophorin, the hemolymph lipoprotein. It increases the lipid carrying capacity of lipophorin by covering the expanding hydrophobic surface resulting from diacylglycerol uptake. It thus plays a critical role in the transport of lipids during flight in several species of insects. The polypeptide is Apolipophorin-3b (Locusta migratoria (Migratory locust)).